Consider the following 735-residue polypeptide: Exocyst complex component 7 (735 aa).

2 coiled-coil regions span residues 5-42 and 63-85; these read QEAS…TKNM and VHKQ…SCLD. Position 133 is a phosphoserine (S133). Residues 239–268 are disordered; the sequence is HKSSSSSGVPYSPAIPNKRKDTPTKKPVKR.

This sequence belongs to the EXO70 family. In terms of assembly, the exocyst complex is composed of EXOC1, EXOC2, EXOC3, EXOC4, EXOC5, EXOC6, EXOC7 and EXOC8. Interacts with ARHQ in a GTP-dependent manner. Interacts with RAB11FIP3. Abundant in the ventricular zone, the outer subventricular zone and the cortical plate of the fetal cortex.

The protein resides in the cytoplasm. The protein localises to the cytosol. It is found in the cell membrane. Its subcellular location is the midbody. It localises to the midbody ring. Functionally, component of the exocyst complex involved in the docking of exocytic vesicles with fusion sites on the plasma membrane. In adipocytes, plays a crucial role in targeting SLC2A4 vesicle to the plasma membrane in response to insulin, perhaps directing the vesicle to the precise site of fusion. It is required for neuron survival and plays an essential role in cortical development. In Homo sapiens (Human), this protein is Exocyst complex component 7 (EXOC7).